A 753-amino-acid chain; its full sequence is MGPLLYRSRHIPAEEAQETGCFTTLPIRIHLRDDLADAASRRFVSDWAREMGDGREKKTYFSFSPVGNWSSLIYPEAIPERLGVLAYLSDLGLIHDDTGEGLSIEEAQAEHDELHAALDPDDKSSLDPDSRAMKTKKLVSQCMLECINLDHELGLNMLAAFRDVWLAISEKNSDKEAQTLEEYLQYRSDNGGMLVFWPMLQFSLGISLSEAEHELVQPIIDAATEGLLLANDYFSWERELREVQSGQSKRIVSAVELFARTMGLSVEDAKEAVKSRIIKSESDFCQRRDDLYKAQPNISSKLRRWIDCAGLAVSGNHYWCSACPRQNAWKNDTLSNGQNGHGLYRIHDGNGFKTVPMTNKTATDLQSNDIKILSNGNGGNAILNGNGAKTVVNGNGAKRKLSQYRMASPEQEPFVQKKRSMDTDTSCQKHDIQTVSQYPHHKPSNLAMDAPAAYISGMPSKGVRAALIDALNTWLHVPSAAIKTITSVVNLLHNASLILDDLEDNSPLRRGLPSAHVIFGQAQSINSANFMFVRAVQEVAQSLSPAALTAVLEELEGLYLGQSWDLYWKFNLACPTEAEYVNMIDHKTGGMFRMLLRVMQAESTATETPGLDFERLILLFGRFFQIRDDYMNFGDYAAQKGLCEDLDEGKFSYPIVYCLANHPEYRGHILGVFRQRPTVATTTASPLSTESKAHLVSCLRKCGAFEKTLSCLRDVERELELEIDRLERLTGEANPMLRLCLAKLSTKGIATLG.

The tract at residues 1-329 (MGPLLYRSRH…CSACPRQNAW (329 aa)) is terpene cyclase. Asp96 is a Mg(2+) binding site. The DDXXD 1 motif lies at 96–100 (DDTGE). Residues 231–239 (NDYFSWERE) carry the NSE/DTE motif. A prenyltransferase region spans residues 330 to 745 (KNDTLSNGQN…MLRLCLAKLS (416 aa)). Isopentenyl diphosphate contacts are provided by Lys461, Arg464, and His493. 2 residues coordinate Mg(2+): Asp500 and Asp504. Positions 500-504 (DDLED) match the DDXXD 2 motif. Arg509 lines the dimethylallyl diphosphate pocket. Arg510 is an isopentenyl diphosphate binding site. Dimethylallyl diphosphate contacts are provided by Lys587, Thr588, Gln625, Asn632, Lys640, and Lys650.

In the N-terminal section; belongs to the terpene synthase family. The protein in the C-terminal section; belongs to the FPP/GGPP synthase family. In terms of assembly, hexamer. It depends on Mg(2+) as a cofactor.

The catalysed reaction is isopentenyl diphosphate + (2E,6E)-farnesyl diphosphate = (2E,6E,10E)-geranylgeranyl diphosphate + diphosphate. It functions in the pathway secondary metabolite biosynthesis; terpenoid biosynthesis. In terms of biological role, bifunctional terpene synthase; part of the gene cluster that mediates the biosynthesis of the mycotoxin fusaproliferin (FUP) that belongs to the class of bicyclic sesterterpenoids. The FUP biosynthetic pathway starts with the enzyme encoded by FUP1 that combines a C-terminal prenyltransferase domain responsible for the synthesis of geranylgeranyl diphosphate with the N-terminal terpene cyclase domain, to yield preterpestacin I. Preterpestacin I is then decorated by oxygenation steps that are catalyzed by two cytochrome P450 monooxygenases. First, FUP2 introduces a hydroxyl group at the C-24 position resulting in the formation of preterpestacin IIa, which can be further oxidized. The second P450 monooxygenase catalyzes the hydroxylation at C-16 and C-17 of preterpestacin IIa, producing preterpestacin III. Subsequently, the FAD-dependent oxidoreductase FUP4 catalyzes the oxidation of the hydroxy group at the C-16 position to a keto group, leading to the formation of (-)-terpestacin, which is the immediate precursor of FUP. The final step in the proposed biosynthetic pathway is the addition of an acetyl group at the C-24 position of terpestacin, which is catalyzed by the acetyltransferase FUP5. This is Bifunctional terpene synthase FUP1 from Fusarium proliferatum (strain ET1) (Orchid endophyte fungus).